The primary structure comprises 181 residues: Probable pyruvoyl-dependent arginine decarboxylase (181 aa).

A Pyruvic acid (Ser) modification is found at Ser43.

It belongs to the PdaD family. Requires pyruvate as cofactor.

The enzyme catalyses L-arginine + H(+) = agmatine + CO2. This Chlorobaculum parvum (strain DSM 263 / NCIMB 8327) (Chlorobium vibrioforme subsp. thiosulfatophilum) protein is Probable pyruvoyl-dependent arginine decarboxylase.